The following is a 585-amino-acid chain: Chaperonin CPN60-like 1, mitochondrial (585 aa).

The N-terminal 32 residues, 1–32, are a transit peptide targeting the mitochondrion; sequence MYRLVSNVASKARIARKCTSQIGSRLNSTRNY.

It belongs to the chaperonin (HSP60) family.

The protein localises to the mitochondrion. Implicated in mitochondrial protein import and macromolecular assembly. May facilitate the correct folding of imported proteins. May also prevent misfolding and promote the refolding and proper assembly of unfolded polypeptides generated under stress conditions in the mitochondrial matrix. This Arabidopsis thaliana (Mouse-ear cress) protein is Chaperonin CPN60-like 1, mitochondrial.